A 720-amino-acid polypeptide reads, in one-letter code: Catalase-peroxidase (720 aa).

The tryptophyl-tyrosyl-methioninium (Trp-Tyr) (with M-233) cross-link spans Trp-82–Tyr-207. His-83 serves as the catalytic Proton acceptor. The tryptophyl-tyrosyl-methioninium (Tyr-Met) (with W-82) cross-link spans Tyr-207–Met-233. Residue His-248 coordinates heme b.

This sequence belongs to the peroxidase family. Peroxidase/catalase subfamily. Homodimer or homotetramer. It depends on heme b as a cofactor. Formation of the three residue Trp-Tyr-Met cross-link is important for the catalase, but not the peroxidase activity of the enzyme.

The catalysed reaction is H2O2 + AH2 = A + 2 H2O. It catalyses the reaction 2 H2O2 = O2 + 2 H2O. In terms of biological role, bifunctional enzyme with both catalase and broad-spectrum peroxidase activity. In Halobacterium salinarum (strain ATCC 29341 / DSM 671 / R1), this protein is Catalase-peroxidase.